A 380-amino-acid chain; its full sequence is MNDPMTTPWGAYALARFPEDPRDRLRAWDASDAYLLRHLAASGTPLSGSVVVLGDRWGALTTALAAHRPTQITDSFLAREATRENLGRAGVDPSSVRLLTTRDTPPERIDVLLVRVPKSLALLEDQLHRLAPGVHEGTVVVGAGMVKEIHTSTLKLFERILGPTRTSLAEQKARLIFCTPDPGLVRDPNPWPYRYRLPDGVGPLSGRPVTNHAGVFCADRLDIGTRFFLRHLPRVSGAERVVDLGCGNGVVGTAVALTEPEAEVLFVDESYQAVASARETFRANADGTAEFLVGDGLSGVPAASVDVVLNNPPFHSHQATTDATAWRMFTGAKRALRPGGELWVIGNRHLGYHLKLRRLFGNSELVASDAKFVVLRAVKK.

This sequence belongs to the methyltransferase superfamily. RlmG family.

Its subcellular location is the cytoplasm. It carries out the reaction guanosine(1835) in 23S rRNA + S-adenosyl-L-methionine = N(2)-methylguanosine(1835) in 23S rRNA + S-adenosyl-L-homocysteine + H(+). Functionally, specifically methylates the guanine in position 1835 (m2G1835) of 23S rRNA. This Streptomyces avermitilis (strain ATCC 31267 / DSM 46492 / JCM 5070 / NBRC 14893 / NCIMB 12804 / NRRL 8165 / MA-4680) protein is Ribosomal RNA large subunit methyltransferase G.